The primary structure comprises 547 residues: Chaperonin GroEL (547 aa).

ATP is bound by residues 30–33 (TLGP), K51, 87–91 (DGTTT), G415, 479–481 (NAA), and D495.

Belongs to the chaperonin (HSP60) family. Forms a cylinder of 14 subunits composed of two heptameric rings stacked back-to-back. Interacts with the co-chaperonin GroES.

It is found in the cytoplasm. The enzyme catalyses ATP + H2O + a folded polypeptide = ADP + phosphate + an unfolded polypeptide.. Functionally, together with its co-chaperonin GroES, plays an essential role in assisting protein folding. The GroEL-GroES system forms a nano-cage that allows encapsulation of the non-native substrate proteins and provides a physical environment optimized to promote and accelerate protein folding. The protein is Chaperonin GroEL of Delftia acidovorans (strain DSM 14801 / SPH-1).